The primary structure comprises 572 residues: Secreted triacylglycerol lipase LIP6 (572 aa).

The first 23 residues, 1-23, serve as a signal peptide directing secretion; sequence MYSTSLLRWLVVALVSAVPLVTA. A disulfide bond links Cys-117 and Cys-291. The active-site Nucleophile is Ser-202. Residue Asp-351 is part of the active site. An N-linked (GlcNAc...) asparagine glycan is attached at Asn-360. Residue His-385 is part of the active site. The segment at 468-572 is disordered; it reads KGGVWNDVLK…SSRRHVARFM (105 aa). Residues 491-511 show a composition bias toward basic and acidic residues; the sequence is PESKKATKKYKSESKAEKKQP. Positions 512–525 are enriched in low complexity; sequence DSIPSSSSKSSSDN. Residue Asn-525 is glycosylated (N-linked (GlcNAc...) asparagine). The segment covering 528-540 has biased composition (basic residues); that stretch reads AHAKYHAHGHGHG. A compositionally biased stretch (low complexity) spans 541 to 562; sequence HASSNSNNGHSHSAKESSTSKG. The span at 563–572 shows a compositional bias: basic residues; it reads SSRRHVARFM.

It belongs to the AB hydrolase superfamily. Lipase family. Class Lip subfamily.

It localises to the secreted. It is found in the cell wall. The catalysed reaction is a triacylglycerol + H2O = a diacylglycerol + a fatty acid + H(+). The enzyme catalyses a monoacylglycerol + H2O = glycerol + a fatty acid + H(+). It catalyses the reaction a diacylglycerol + H2O = a monoacylglycerol + a fatty acid + H(+). Its function is as follows. Secreted lipase involved in Dandruff and seborrheic dermatitis (D/SD) probably via lipase-mediated breakdown of sebaceous lipids and release of irritating free fatty acids. Shows only minimal activity against triolein. Mostly converts monoolein to di- and triolein, while free fatty acids are only produced in low amounts. The protein is Secreted triacylglycerol lipase LIP6 of Malassezia globosa (strain ATCC MYA-4612 / CBS 7966) (Dandruff-associated fungus).